The following is a 177-amino-acid chain: Large ribosomal subunit protein uL6 (177 aa).

It belongs to the universal ribosomal protein uL6 family. Part of the 50S ribosomal subunit.

Its function is as follows. This protein binds to the 23S rRNA, and is important in its secondary structure. It is located near the subunit interface in the base of the L7/L12 stalk, and near the tRNA binding site of the peptidyltransferase center. The sequence is that of Large ribosomal subunit protein uL6 from Aeromonas hydrophila subsp. hydrophila (strain ATCC 7966 / DSM 30187 / BCRC 13018 / CCUG 14551 / JCM 1027 / KCTC 2358 / NCIMB 9240 / NCTC 8049).